A 695-amino-acid chain; its full sequence is Solute carrier family 53 member 1 (695 aa).

At 1–228 (MKFAEHLSAH…RVPPLGAAQP (228 aa)) the chain is on the cytoplasmic side. The SPX domain occupies 2-224 (KFAEHLSAHI…MKRLRVPPLG (223 aa)). Positions 158-165 (KILKKHDK) are important for inositol polyphosphate binding. A helical membrane pass occupies residues 229–259 (APAWTTFRVGLFCGIFIVLNITLVFAAVFKL). Residues 260-264 (ETDRT) are Extracellular-facing. A helical transmembrane segment spans residues 265 to 296 (VWPLIRIYRGGFLLIEFLFLLGINTYGWRQAG). Over 297-309 (VNHVLIFELNPRN) the chain is Cytoplasmic. A helical transmembrane segment spans residues 310–337 (NLSHQHLFEIAGFLGILWCLSLLACFFA). Residues 338–343 (PISIIP) lie on the Extracellular side of the membrane. Residues 344–365 (IYVYPLALYGFMVFFLINPTKT) form a helical membrane-spanning segment. Positions 366–383 (FYYKSRFWLLKLLFRVFT) form an intramembrane region, helical. Topologically, residues 384–388 (APFHK) are cytoplasmic. A discontinuously helical transmembrane segment spans residues 389–422 (VGFADFWLADQLNSLSVILMDLEYMICFYSFELK). Phosphate contacts are provided by Asp398 and Asn401. Over 423–429 (WDESKGL) the chain is Extracellular. The discontinuously helical transmembrane segment at 430 to 471 (LPNDPQEPEFCHKYSYGVRAIVQCIPAWLRFIQCLRRYRDTR) threads the bilayer. One can recognise an EXS domain in the interval 439–642 (FCHKYSYGVR…LNADDQTLLE (204 aa)). Arg472 is a topological domain (cytoplasmic). A helical membrane pass occupies residues 473–503 (AFPHLVNAGKYSTTFFTVTFAALYSTHEEQN). 2 residues coordinate phosphate: Lys482 and Tyr483. Topologically, residues 504–506 (HSD) are extracellular. The chain crosses the membrane as a helical span at residues 507–534 (TVVFFYLWVFFCIISSCYTLIWDLKMDW). Topologically, residues 535–553 (GLFDKNAGENTFLREEIVY) are cytoplasmic. A discontinuously helical membrane pass occupies residues 554 to 584 (PQKAYYYCAIIEDVILRFAWTIQISITATFK). Arg570 is a phosphate binding site. The Extracellular segment spans residues 585–586 (PH). The chain crosses the membrane as a helical span at residues 587-625 (VGNIIATVFAPLEVFRRFVWNFFRLENEHLNNCGEFRAV). Phosphate-binding residues include Arg602 and Arg603. Topologically, residues 626–695 (RDISVAPLNA…IEDTDDEANT (70 aa)) are cytoplasmic. At Ser667 the chain carries Phosphoserine. The segment at 671–695 (PRLASQSKARDTKVLIEDTDDEANT) is disordered. A Phosphothreonine modification is found at Thr689.

It belongs to the SYG1 (TC 2.A.94) family. In terms of assembly, homodimer. As to expression, expressed in pancreatic islets.

The protein resides in the cell membrane. It carries out the reaction phosphate(in) = phosphate(out). Inorganic ion transporter that mediates phosphate ion export across plasma membrane. Plays a major role in phosphate homeostasis, preventing intracellular phosphate accumulation and possible calcium phosphate precipitation, ultimately preserving calcium signaling. Binds inositol hexakisphosphate (Ins6P) and similar inositol polyphosphates, such as 5-diphospho-inositol pentakisphosphate (5-InsP7), which are important intracellular signaling molecules involved in regulation of phosphate flux. Functionally, (Microbial infection) Receptor for xenotropic and polytropic murine leukemia (X- and P-MLV) retroviruses. Confers susceptibility to X- or P-MLV infection in vitro. The chain is Solute carrier family 53 member 1 from Mus musculus (Mouse).